The following is a 102-amino-acid chain: Large ribosomal subunit protein uL24 (102 aa).

The protein belongs to the universal ribosomal protein uL24 family. In terms of assembly, part of the 50S ribosomal subunit.

In terms of biological role, one of two assembly initiator proteins, it binds directly to the 5'-end of the 23S rRNA, where it nucleates assembly of the 50S subunit. Its function is as follows. One of the proteins that surrounds the polypeptide exit tunnel on the outside of the subunit. This chain is Large ribosomal subunit protein uL24, found in Leuconostoc citreum (strain KM20).